Here is a 276-residue protein sequence, read N- to C-terminus: NH(3)-dependent NAD(+) synthetase (276 aa).

Position 43 to 50 (43 to 50 (GISGGVDS)) interacts with ATP. D49 contacts Mg(2+). R146 contacts deamido-NAD(+). T166 lines the ATP pocket. Mg(2+) is bound at residue E171. Deamido-NAD(+)-binding residues include K179 and D186. ATP is bound by residues K195 and T217. 266-267 (HK) contributes to the deamido-NAD(+) binding site.

This sequence belongs to the NAD synthetase family. As to quaternary structure, homodimer.

The enzyme catalyses deamido-NAD(+) + NH4(+) + ATP = AMP + diphosphate + NAD(+) + H(+). Its pathway is cofactor biosynthesis; NAD(+) biosynthesis; NAD(+) from deamido-NAD(+) (ammonia route): step 1/1. Functionally, catalyzes the ATP-dependent amidation of deamido-NAD to form NAD. Uses ammonia as a nitrogen source. The polypeptide is NH(3)-dependent NAD(+) synthetase (Aliivibrio salmonicida (strain LFI1238) (Vibrio salmonicida (strain LFI1238))).